The following is a 326-amino-acid chain: tRNA-dihydrouridine(16) synthase (326 aa).

Residues 8-10 (PME) and glutamine 69 each bind FMN. The Proton donor role is filled by cysteine 99. FMN-binding positions include lysine 140, 200–202 (NGE), and 224–225 (GR).

It belongs to the Dus family. DusC subfamily. It depends on FMN as a cofactor.

The catalysed reaction is 5,6-dihydrouridine(16) in tRNA + NADP(+) = uridine(16) in tRNA + NADPH + H(+). It catalyses the reaction 5,6-dihydrouridine(16) in tRNA + NAD(+) = uridine(16) in tRNA + NADH + H(+). Functionally, catalyzes the synthesis of 5,6-dihydrouridine (D), a modified base found in the D-loop of most tRNAs, via the reduction of the C5-C6 double bond in target uridines. Specifically modifies U16 in tRNAs. In Ralstonia nicotianae (strain ATCC BAA-1114 / GMI1000) (Ralstonia solanacearum), this protein is tRNA-dihydrouridine(16) synthase.